The chain runs to 564 residues: uncharacterized protein (564 aa).

Transmembrane regions (helical) follow at residues 12 to 32 (TYYLWIALFLLLLYVSPLFIL), 97 to 119 (MTAYAISQTVTRVVAFFGMYVLL), 139 to 161 (AFALTPFWPSGMLSTLGYPLALW), 188 to 208 (FVLGFFFFLAGMACFWLYDAI), 213 to 233 (WNLMFLGSIAFMTSIYLFVEY), 277 to 297 (MTVHTVVILPILMVVFAALLF), 306 to 326 (NVYLFLCVLNYGLSLWYAFWF), and 348 to 368 (FHFLRPLVIYVSFALALYLIW).

Its subcellular location is the cell membrane. This is an uncharacterized protein from Bacillus subtilis (strain 168).